The following is a 173-amino-acid chain: Crossover junction endodeoxyribonuclease RuvC (173 aa).

Active-site residues include aspartate 8, glutamate 67, and aspartate 139. Mg(2+) is bound by residues aspartate 8, glutamate 67, and aspartate 139.

The protein belongs to the RuvC family. As to quaternary structure, homodimer which binds Holliday junction (HJ) DNA. The HJ becomes 2-fold symmetrical on binding to RuvC with unstacked arms; it has a different conformation from HJ DNA in complex with RuvA. In the full resolvosome a probable DNA-RuvA(4)-RuvB(12)-RuvC(2) complex forms which resolves the HJ. It depends on Mg(2+) as a cofactor.

The protein localises to the cytoplasm. The catalysed reaction is Endonucleolytic cleavage at a junction such as a reciprocal single-stranded crossover between two homologous DNA duplexes (Holliday junction).. Functionally, the RuvA-RuvB-RuvC complex processes Holliday junction (HJ) DNA during genetic recombination and DNA repair. Endonuclease that resolves HJ intermediates. Cleaves cruciform DNA by making single-stranded nicks across the HJ at symmetrical positions within the homologous arms, yielding a 5'-phosphate and a 3'-hydroxyl group; requires a central core of homology in the junction. The consensus cleavage sequence is 5'-(A/T)TT(C/G)-3'. Cleavage occurs on the 3'-side of the TT dinucleotide at the point of strand exchange. HJ branch migration catalyzed by RuvA-RuvB allows RuvC to scan DNA until it finds its consensus sequence, where it cleaves and resolves the cruciform DNA. This is Crossover junction endodeoxyribonuclease RuvC from Erwinia tasmaniensis (strain DSM 17950 / CFBP 7177 / CIP 109463 / NCPPB 4357 / Et1/99).